The sequence spans 125 residues: Large ribosomal subunit protein bL20 (125 aa).

Belongs to the bacterial ribosomal protein bL20 family.

Its function is as follows. Binds directly to 23S ribosomal RNA and is necessary for the in vitro assembly process of the 50S ribosomal subunit. It is not involved in the protein synthesizing functions of that subunit. This Zymomonas mobilis subsp. mobilis (strain ATCC 31821 / ZM4 / CP4) protein is Large ribosomal subunit protein bL20.